The chain runs to 313 residues: Serine/threonine-protein phosphatase PP2A-4 catalytic subunit (313 aa).

Mn(2+) contacts are provided by Asp-61, His-63, Asp-89, and Asn-121. The Proton donor role is filled by His-122. Positions 171 and 245 each coordinate Mn(2+). A Leucine methyl ester modification is found at Leu-313.

Belongs to the PPP phosphatase family. PP-2A subfamily. In terms of assembly, PP2A consists of a common heterodimeric core enzyme, composed of a 36 kDa catalytic subunit (subunit C) and a 65 kDa constant regulatory subunit (subunit A), that associates with a variety of regulatory subunits such as subunits B (the R2/B/PR55/B55, R3/B''/PR72/PR130/PR59 and R5/B'/B56 families). Interacts with SIC/RON3. It depends on Mn(2+) as a cofactor. Post-translationally, reversibly methyl esterified on Leu-313 by leucine carboxyl methyltransferase 1 (LCMT1) and pectin methylesterase 1 (PME1). Carboxyl methylation influences the affinity of the catalytic subunit for the different regulatory subunits, thereby modulating the PP2A holoenzyme's substrate specificity, enzyme activity and cellular localization. Phosphorylation of either threonine (by autophosphorylation-activated protein kinase) or tyrosine results in inactivation of the phosphatase. Auto-dephosphorylation has been suggested as a mechanism for reactivation.

It is found in the cytoplasm. It carries out the reaction O-phospho-L-seryl-[protein] + H2O = L-seryl-[protein] + phosphate. It catalyses the reaction O-phospho-L-threonyl-[protein] + H2O = L-threonyl-[protein] + phosphate. Its function is as follows. Functions redundantly with PP2A3, and is involved in establishing auxin gradients, apical-basal axis of polarity and root and shoot apical meristem during embryogenesis. May dephosphorylate PIN1 and regulate its subcellular distribution for polar auxin transport. The holoenzyme composed of PP2AA1, PP2A4 and B'ZETA or B'ETA acts as a negative regulator of plant innate immunity by controlling BAK1 phosphorylation state and activation in surface-localized immune receptor complexes. This Arabidopsis thaliana (Mouse-ear cress) protein is Serine/threonine-protein phosphatase PP2A-4 catalytic subunit.